A 165-amino-acid polypeptide reads, in one-letter code: Large ribosomal subunit protein uL10 (165 aa).

This sequence belongs to the universal ribosomal protein uL10 family. As to quaternary structure, part of the ribosomal stalk of the 50S ribosomal subunit. The N-terminus interacts with L11 and the large rRNA to form the base of the stalk. The C-terminus forms an elongated spine to which L12 dimers bind in a sequential fashion forming a multimeric L10(L12)X complex.

In terms of biological role, forms part of the ribosomal stalk, playing a central role in the interaction of the ribosome with GTP-bound translation factors. This Burkholderia thailandensis (strain ATCC 700388 / DSM 13276 / CCUG 48851 / CIP 106301 / E264) protein is Large ribosomal subunit protein uL10.